A 682-amino-acid chain; its full sequence is Potassium-transporting ATPase ATP-binding subunit (682 aa).

The next 4 helical transmembrane spans lie at 34–54 (PVMF…IAMA), 62–82 (ALFS…ANFA), 219–239 (IALT…TATL), and 254–274 (VLVA…LSAI). Catalysis depends on Asp-307, which acts as the 4-aspartylphosphate intermediate. ATP is bound by residues Asp-344, Glu-348, 377 to 384 (FTAQSRMS), and Lys-395. Asp-518 and Asp-522 together coordinate Mg(2+). A run of 3 helical transmembrane segments spans residues 588–608 (FAII…LNIM), 616–636 (AILS…PLAL), and 656–676 (IYGL…DLLL).

It belongs to the cation transport ATPase (P-type) (TC 3.A.3) family. Type IA subfamily. The system is composed of three essential subunits: KdpA, KdpB and KdpC.

It localises to the cell inner membrane. It catalyses the reaction K(+)(out) + ATP + H2O = K(+)(in) + ADP + phosphate + H(+). Part of the high-affinity ATP-driven potassium transport (or Kdp) system, which catalyzes the hydrolysis of ATP coupled with the electrogenic transport of potassium into the cytoplasm. This subunit is responsible for energy coupling to the transport system and for the release of the potassium ions to the cytoplasm. The chain is Potassium-transporting ATPase ATP-binding subunit from Escherichia coli O6:K15:H31 (strain 536 / UPEC).